The chain runs to 565 residues: NAD-dependent malic enzyme (565 aa).

Residue Tyr-104 is the Proton donor of the active site. Arg-157 is an NAD(+) binding site. Lys-175 (proton acceptor) is an active-site residue. A divalent metal cation-binding residues include Glu-246, Asp-247, and Asp-270. Positions 270 and 418 each coordinate NAD(+).

It belongs to the malic enzymes family. As to quaternary structure, homotetramer. It depends on Mg(2+) as a cofactor. The cofactor is Mn(2+).

The enzyme catalyses (S)-malate + NAD(+) = pyruvate + CO2 + NADH. It carries out the reaction oxaloacetate + H(+) = pyruvate + CO2. In Escherichia coli O157:H7, this protein is NAD-dependent malic enzyme.